A 602-amino-acid polypeptide reads, in one-letter code: Elongation factor 4 (602 aa).

One can recognise a tr-type G domain in the interval 6–188 (DRIRNFCIIA…RIVRDVPPPG (183 aa)). GTP is bound by residues 18-23 (DHGKST) and 135-138 (NKID).

Belongs to the TRAFAC class translation factor GTPase superfamily. Classic translation factor GTPase family. LepA subfamily.

It is found in the cell membrane. It catalyses the reaction GTP + H2O = GDP + phosphate + H(+). Functionally, required for accurate and efficient protein synthesis under certain stress conditions. May act as a fidelity factor of the translation reaction, by catalyzing a one-codon backward translocation of tRNAs on improperly translocated ribosomes. Back-translocation proceeds from a post-translocation (POST) complex to a pre-translocation (PRE) complex, thus giving elongation factor G a second chance to translocate the tRNAs correctly. Binds to ribosomes in a GTP-dependent manner. This Desulforudis audaxviator (strain MP104C) protein is Elongation factor 4.